Reading from the N-terminus, the 109-residue chain is Small serum protein 2 (109 aa).

An N-terminal signal peptide occupies residues 1–19; sequence MRVFFSLIIFSFMLATCQG. Disulfide bonds link C21–C72, C39–C64, C59–C93, C62–C71, and C84–C107.

Forms a stable, non-covalent complex with serotriflin.

It localises to the secreted. Its function is as follows. May serve as a self-defense protein against the toxic effects of the snake venom during accidental envenomation. Does not show inhibitory activity towards brevilysin H6. This Protobothrops flavoviridis (Habu) protein is Small serum protein 2.